Reading from the N-terminus, the 480-residue chain is MPIFVNTVYCKNILALSMTKKFKTIIDAIGGNIIVNSTILKKLSPYFRTHLRQKYTKNKDPVTWVCLDLDIHSLTSIVIYSYTGKVYIDSHNVVNLLRASILTSVEFIIYTCINFILRDFRKEYCVECYMMGIEYGLSNLLCHTKNFIAKHFLELEDDIIDNFDYLSMKLILESDELNVPDEDYVVDFVIKWYIKRRNKLGNLLLLIKNVIRSNYLSPRGINNVKWILDCTKIFHCDKQPRKSYKYPFIEYPMNMDQIIDIFHMCTSTHVGEVVYLIGGWMNNEIHNNAIAVNYISNNWIPIPPMNSPRLYASGIPANNKLYVVGGLPNPTSVERWFHGDAAWVNMPSLLKPRCNPAVASINNVIYVMGGHSETDTTTEYLLPNHDQWQFGPSTYYPHYKSCALVFGRRLFLVGRNAEFYCESSNTWTLIDDPIYPRDNPELIIVDNKLLLIGGFYRESYIDTIEVYNHHTYSWNIWDGK.

The BTB domain occupies Cys10–Ser90. The BACK domain occupies Cys125–Asn223. Kelch repeat units lie at residues Val273–Asn319, Lys320–Asn363, Ile365–Arg408, Leu410–Asn447, and Lys448–Lys480.

Belongs to the orthopoxvirus OPG047 family.

Its function is as follows. Might have a role in the suppression of host immune response. This Vaccinia virus (strain Western Reserve) (VACV) protein is Immune evasion protein OPG047 (OPG047).